Consider the following 119-residue polypeptide: MRIKNGVWARKRHKKWLKLAKGYFGAKSKIFKQAHVAVMRSLRYAYIGRRLKKRDFRRLWITRINAAARQNGLSYSKFMNGLKKAGINLNRKVLADMAVNDQKAFAELVEIAKKQINAQ.

Belongs to the bacterial ribosomal protein bL20 family.

In terms of biological role, binds directly to 23S ribosomal RNA and is necessary for the in vitro assembly process of the 50S ribosomal subunit. It is not involved in the protein synthesizing functions of that subunit. The polypeptide is Large ribosomal subunit protein bL20 (Caldicellulosiruptor bescii (strain ATCC BAA-1888 / DSM 6725 / KCTC 15123 / Z-1320) (Anaerocellum thermophilum)).